We begin with the raw amino-acid sequence, 305 residues long: Coenzyme PQQ synthesis protein B (305 aa).

This sequence belongs to the PqqB family.

Its pathway is cofactor biosynthesis; pyrroloquinoline quinone biosynthesis. In terms of biological role, may be involved in the transport of PQQ or its precursor to the periplasm. This Methylobacillus flagellatus protein is Coenzyme PQQ synthesis protein B.